Reading from the N-terminus, the 321-residue chain is MLNKIIERENLSFEESYELFNMLLNESEMRIAAYLVALQTKGVTADEIAGFAKAMRDNAVKIDLGEVTDTCGTGGDGSKTINVSTAVSIILSCFTKVAKHGNVSITSKSGSANVYEALGCKIPETPDDAKKSMEKTNFAFLFAPKYHPTLKKIMPVRNELKVKTIFNILGPLANPANPKYQILGVNSAELSENVAIALSKVGGIKKALVVYGNGLDELTPNGTSKITEYDGKFDTYEVTPKDFGLDYSKIRPCESPDESAKRLIDVFSGKINDDRNFILMNAAGALYTSEIASDFLDGVEIAKEAIESGKVLKKLEEIRNV.

5-phospho-alpha-D-ribose 1-diphosphate is bound by residues glycine 72, 75–76, threonine 80, 82–85, 99–107, and serine 111; these read GD, NVST, and KHGNVSITS. Glycine 72 provides a ligand contact to anthranilate. Serine 84 provides a ligand contact to Mg(2+). Anthranilate is bound at residue asparagine 102. An anthranilate-binding site is contributed by arginine 157. Mg(2+)-binding residues include aspartate 216 and glutamate 217.

The protein belongs to the anthranilate phosphoribosyltransferase family. In terms of assembly, homodimer. Requires Mg(2+) as cofactor.

It carries out the reaction N-(5-phospho-beta-D-ribosyl)anthranilate + diphosphate = 5-phospho-alpha-D-ribose 1-diphosphate + anthranilate. It functions in the pathway amino-acid biosynthesis; L-tryptophan biosynthesis; L-tryptophan from chorismate: step 2/5. Functionally, catalyzes the transfer of the phosphoribosyl group of 5-phosphorylribose-1-pyrophosphate (PRPP) to anthranilate to yield N-(5'-phosphoribosyl)-anthranilate (PRA). The chain is Anthranilate phosphoribosyltransferase from Methanococcus maripaludis (strain C6 / ATCC BAA-1332).